The following is a 45-amino-acid chain: MSKRTFQPNNRRRAKTHGFRLRMRTRAGRAIISTRRAKGRARLAA.

This sequence belongs to the bacterial ribosomal protein bL34 family.

This chain is Large ribosomal subunit protein bL34, found in Salinispora tropica (strain ATCC BAA-916 / DSM 44818 / JCM 13857 / NBRC 105044 / CNB-440).